The following is a 236-amino-acid chain: Leucyl/phenylalanyl-tRNA--protein transferase (236 aa).

The protein belongs to the L/F-transferase family.

The protein localises to the cytoplasm. The catalysed reaction is N-terminal L-lysyl-[protein] + L-leucyl-tRNA(Leu) = N-terminal L-leucyl-L-lysyl-[protein] + tRNA(Leu) + H(+). It catalyses the reaction N-terminal L-arginyl-[protein] + L-leucyl-tRNA(Leu) = N-terminal L-leucyl-L-arginyl-[protein] + tRNA(Leu) + H(+). It carries out the reaction L-phenylalanyl-tRNA(Phe) + an N-terminal L-alpha-aminoacyl-[protein] = an N-terminal L-phenylalanyl-L-alpha-aminoacyl-[protein] + tRNA(Phe). Functions in the N-end rule pathway of protein degradation where it conjugates Leu, Phe and, less efficiently, Met from aminoacyl-tRNAs to the N-termini of proteins containing an N-terminal arginine or lysine. The protein is Leucyl/phenylalanyl-tRNA--protein transferase of Yersinia enterocolitica serotype O:8 / biotype 1B (strain NCTC 13174 / 8081).